The sequence spans 365 residues: Protein RecA (365 aa).

Residue 69–76 (GPESSGKT) participates in ATP binding. A disordered region spans residues 344–365 (LDDNPDTDDHDVEDIDENTDEE). Over residues 347 to 365 (NPDTDDHDVEDIDENTDEE) the composition is skewed to acidic residues.

The protein belongs to the RecA family.

The protein resides in the cytoplasm. In terms of biological role, can catalyze the hydrolysis of ATP in the presence of single-stranded DNA, the ATP-dependent uptake of single-stranded DNA by duplex DNA, and the ATP-dependent hybridization of homologous single-stranded DNAs. It interacts with LexA causing its activation and leading to its autocatalytic cleavage. The polypeptide is Protein RecA (Arthrospira platensis (Spirulina platensis)).